The following is a 309-amino-acid chain: D-alanine--D-alanine ligase (309 aa).

The ATP-grasp domain maps to 110 to 305; that stretch reads KLCWTGAGLP…FQELVWHILE (196 aa). 136-191 serves as a coordination point for ATP; it reads RQALGFPVIVKPAEEGSSIGMSRAATAEELAQAWERASGYGCAVFAERWIDGVEYT. 3 residues coordinate Mg(2+): Asp259, Glu272, and Asn274.

It belongs to the D-alanine--D-alanine ligase family. It depends on Mg(2+) as a cofactor. Mn(2+) serves as cofactor.

It localises to the cytoplasm. It catalyses the reaction 2 D-alanine + ATP = D-alanyl-D-alanine + ADP + phosphate + H(+). It participates in cell wall biogenesis; peptidoglycan biosynthesis. In terms of biological role, cell wall formation. The polypeptide is D-alanine--D-alanine ligase (Methylococcus capsulatus (strain ATCC 33009 / NCIMB 11132 / Bath)).